The primary structure comprises 323 residues: Beta-ketoacyl-[acyl-carrier-protein] synthase III (323 aa).

Active-site residues include Cys114 and His250. An ACP-binding region spans residues 251-255 (QANIR). The active site involves Asn280.

Belongs to the thiolase-like superfamily. FabH family. Homodimer.

The protein resides in the cytoplasm. It carries out the reaction malonyl-[ACP] + acetyl-CoA + H(+) = 3-oxobutanoyl-[ACP] + CO2 + CoA. Its pathway is lipid metabolism; fatty acid biosynthesis. Its function is as follows. Catalyzes the condensation reaction of fatty acid synthesis by the addition to an acyl acceptor of two carbons from malonyl-ACP. Catalyzes the first condensation reaction which initiates fatty acid synthesis and may therefore play a role in governing the total rate of fatty acid production. Possesses both acetoacetyl-ACP synthase and acetyl transacylase activities. Its substrate specificity determines the biosynthesis of branched-chain and/or straight-chain of fatty acids. In Roseobacter denitrificans (strain ATCC 33942 / OCh 114) (Erythrobacter sp. (strain OCh 114)), this protein is Beta-ketoacyl-[acyl-carrier-protein] synthase III.